The following is a 515-amino-acid chain: ATP synthase subunit alpha (515 aa).

An ATP-binding site is contributed by 171 to 178 (GDRQTGKT).

Belongs to the ATPase alpha/beta chains family. In terms of assembly, F-type ATPases have 2 components, CF(1) - the catalytic core - and CF(0) - the membrane proton channel. CF(1) has five subunits: alpha(3), beta(3), gamma(1), delta(1), epsilon(1). CF(0) has three main subunits: a(1), b(2) and c(9-12). The alpha and beta chains form an alternating ring which encloses part of the gamma chain. CF(1) is attached to CF(0) by a central stalk formed by the gamma and epsilon chains, while a peripheral stalk is formed by the delta and b chains.

It is found in the cell inner membrane. It catalyses the reaction ATP + H2O + 4 H(+)(in) = ADP + phosphate + 5 H(+)(out). Functionally, produces ATP from ADP in the presence of a proton gradient across the membrane. The alpha chain is a regulatory subunit. In Xanthomonas axonopodis pv. citri (strain 306), this protein is ATP synthase subunit alpha.